The chain runs to 37 residues: Large ribosomal subunit protein bL36 (37 aa).

It belongs to the bacterial ribosomal protein bL36 family.

The sequence is that of Large ribosomal subunit protein bL36 from Acidovorax ebreus (strain TPSY) (Diaphorobacter sp. (strain TPSY)).